A 217-amino-acid chain; its full sequence is Growth hormone variant (217 aa).

The N-terminal stretch at 1–26 (MAAGSRTSLLLAFGLLCLSWLQEGSA) is a signal peptide. Disulfide bonds link C79–C191 and C208–C215. Position 132 is a phosphoserine (S132). N-linked (GlcNAc...) asparagine glycosylation is present at N166. S176 is subject to Phosphoserine.

The protein belongs to the somatotropin/prolactin family. As to quaternary structure, monomer, dimer, trimer, tetramer and pentamer, disulfide-linked or non-covalently associated, in homomeric and heteromeric combinations. Can also form a complex either with GHBP or with the alpha2-macroglobulin complex. Expressed in the placenta.

The protein localises to the secreted. Its function is as follows. Plays an important role in growth control. Its major role in stimulating body growth is to stimulate the liver and other tissues to secrete IGF1. It stimulates both the differentiation and proliferation of myoblasts. It also stimulates amino acid uptake and protein synthesis in muscle and other tissues. This is Growth hormone variant (GH2) from Homo sapiens (Human).